We begin with the raw amino-acid sequence, 528 residues long: Glucose-6-phosphate isomerase (528 aa).

Glu322 functions as the Proton donor in the catalytic mechanism. Catalysis depends on residues His351 and Lys455.

This sequence belongs to the GPI family.

It is found in the cytoplasm. The catalysed reaction is alpha-D-glucose 6-phosphate = beta-D-fructose 6-phosphate. The protein operates within carbohydrate biosynthesis; gluconeogenesis. It functions in the pathway carbohydrate degradation; glycolysis; D-glyceraldehyde 3-phosphate and glycerone phosphate from D-glucose: step 2/4. Its function is as follows. Catalyzes the reversible isomerization of glucose-6-phosphate to fructose-6-phosphate. In Nostoc punctiforme (strain ATCC 29133 / PCC 73102), this protein is Glucose-6-phosphate isomerase.